Consider the following 227-residue polypeptide: Orotidine 5'-phosphate decarboxylase (227 aa).

Residues Asp8, Lys30, 57 to 66 (DLKFHDIPNT), Thr116, Arg177, Gln186, Gly206, and Arg207 contribute to the substrate site. The Proton donor role is filled by Lys59.

The protein belongs to the OMP decarboxylase family. Type 1 subfamily. In terms of assembly, homodimer.

The catalysed reaction is orotidine 5'-phosphate + H(+) = UMP + CO2. It functions in the pathway pyrimidine metabolism; UMP biosynthesis via de novo pathway; UMP from orotate: step 2/2. Its function is as follows. Catalyzes the decarboxylation of orotidine 5'-monophosphate (OMP) to uridine 5'-monophosphate (UMP). This chain is Orotidine 5'-phosphate decarboxylase, found in Acinetobacter baumannii (strain AB307-0294).